Consider the following 64-residue polypeptide: Alpha-conotoxin-like Ai1.2 (64 aa).

A signal peptide spans 1–17; the sequence is MFTVFLLVVLATTVVSS. Positions 18–43 are excised as a propeptide; that stretch reads TSGRRAFRGRNAAAKASGLVGLTDRR. Disulfide bonds link C46-C52 and C47-C60. A ser-Xaa-Pro motif, crucial for potent interaction with nAChR region spans residues 48 to 50; the sequence is SDP. G61 carries the glycine amide modification.

It belongs to the conotoxin A superfamily. As to expression, expressed by the venom duct.

It localises to the secreted. Alpha-conotoxins act on postsynaptic membranes, they bind to the nicotinic acetylcholine receptors (nAChR) and thus inhibit them. In Conus ammiralis (Admiral cone), this protein is Alpha-conotoxin-like Ai1.2.